The primary structure comprises 412 residues: 8-amino-7-oxononanoate synthase (412 aa).

106 to 107 (GY) is a pyridoxal 5'-phosphate binding site. A substrate-binding site is contributed by His-131. Ser-187, His-219, and Thr-247 together coordinate pyridoxal 5'-phosphate. Lys-250 carries the N6-(pyridoxal phosphate)lysine modification. Thr-370 is a binding site for substrate.

Belongs to the class-II pyridoxal-phosphate-dependent aminotransferase family. BioF subfamily. Homodimer. Pyridoxal 5'-phosphate serves as cofactor.

It catalyses the reaction 6-carboxyhexanoyl-[ACP] + L-alanine + H(+) = (8S)-8-amino-7-oxononanoate + holo-[ACP] + CO2. It participates in cofactor biosynthesis; biotin biosynthesis. Its function is as follows. 8-amino-7-oxononanoate synthase; part of the cluster involved in the biosynthesis of biotin (also known as vitamin B8 or vitamin H), a water-soluble vitamin that functions as a prosthetic group of many carboxylases, such as acetyl-CoA carboxylase and pyruvate carboxylase. Catalyzes the decarboxylative condensation of pimeloyl-[acyl-carrier protein] and L-alanine to produce 8-amino-7-oxononanoate (AON). This Emericella nidulans (strain FGSC A4 / ATCC 38163 / CBS 112.46 / NRRL 194 / M139) (Aspergillus nidulans) protein is 8-amino-7-oxononanoate synthase.